We begin with the raw amino-acid sequence, 334 residues long: Beta-hexosaminidase (334 aa).

Residues Asp60, Arg68, Arg133, and 163-164 contribute to the substrate site; that span reads KH. The Proton donor/acceptor role is filled by His176. Asp247 acts as the Nucleophile in catalysis.

This sequence belongs to the glycosyl hydrolase 3 family. NagZ subfamily.

The protein resides in the cytoplasm. It carries out the reaction Hydrolysis of terminal non-reducing N-acetyl-D-hexosamine residues in N-acetyl-beta-D-hexosaminides.. It participates in cell wall biogenesis; peptidoglycan recycling. Functionally, plays a role in peptidoglycan recycling by cleaving the terminal beta-1,4-linked N-acetylglucosamine (GlcNAc) from peptide-linked peptidoglycan fragments, giving rise to free GlcNAc, anhydro-N-acetylmuramic acid and anhydro-N-acetylmuramic acid-linked peptides. This Xanthomonas oryzae pv. oryzae (strain MAFF 311018) protein is Beta-hexosaminidase.